The chain runs to 129 residues: Small ribosomal subunit protein uS11 (129 aa).

Belongs to the universal ribosomal protein uS11 family. In terms of assembly, part of the 30S ribosomal subunit. Interacts with proteins S7 and S18. Binds to IF-3.

In terms of biological role, located on the platform of the 30S subunit, it bridges several disparate RNA helices of the 16S rRNA. Forms part of the Shine-Dalgarno cleft in the 70S ribosome. This is Small ribosomal subunit protein uS11 from Bacillus cereus (strain G9842).